Reading from the N-terminus, the 142-residue chain is UPF0275 protein PM0505 (142 aa).

This sequence belongs to the UPF0275 family.

The protein is UPF0275 protein PM0505 of Pasteurella multocida (strain Pm70).